Reading from the N-terminus, the 166-residue chain is Ribonuclease H (166 aa).

Positions 5–147 constitute an RNase H type-1 domain; it reads PRKRVALFTD…VDREARRQAQ (143 aa). 4 residues coordinate Mg(2+): Asp14, Glu52, Asp74, and Asp139. A disordered region spans residues 128 to 166; it reads GHTGHPENERVDREARRQAQSQAKTPCPPQAPTLFHEEA. Basic and acidic residues predominate over residues 131-144; sequence GHPENERVDREARR.

Belongs to the RNase H family. Monomer. Mg(2+) serves as cofactor.

The protein resides in the cytoplasm. The enzyme catalyses Endonucleolytic cleavage to 5'-phosphomonoester.. Its function is as follows. Endonuclease that specifically degrades the RNA of RNA-DNA hybrids. This chain is Ribonuclease H, found in Thermus thermophilus (strain ATCC BAA-163 / DSM 7039 / HB27).